The chain runs to 205 residues: MSAFITFEGPEGSGKTTVINEVYHRLVKDYDVIMTREPGGVPTGEEIRKIVLEGNDMDIRTEAMLFAASRREHLVLKVIPALKEGKVVLCDRYIDSSLAYQGYARGIGVEEVRALNEFAINGLYPDLTIYLNVSAEVGRERIIKNSRDQNRLDQEDLKFHEKVIEGYQEIIHNESQRFKSVNADQPLENVVEDTYQTIIKYLEKI.

ATP is bound at residue 9–16; that stretch reads GPEGSGKT.

Belongs to the thymidylate kinase family.

It catalyses the reaction dTMP + ATP = dTDP + ADP. Its function is as follows. Phosphorylation of dTMP to form dTDP in both de novo and salvage pathways of dTTP synthesis. In Staphylococcus aureus (strain NCTC 8325 / PS 47), this protein is Thymidylate kinase.